A 123-amino-acid polypeptide reads, in one-letter code: Defensin beta 118 (123 aa).

A signal peptide spans 1 to 19 (MKLLLLALPMLVLLPQVIP). Intrachain disulfides connect C27-C54, C34-C48, and C38-C55. A propeptide spanning residues 65–123 (VPTTSPTPLSDSTPGIIDDILTVRFTTDYFEVSSKKDMIEESEAGRGTETSLPNVHHSS) is cleaved from the precursor. Basic and acidic residues predominate over residues 100–110 (KDMIEESEAGR). A disordered region spans residues 100–123 (KDMIEESEAGRGTETSLPNVHHSS). The segment covering 112-123 (TETSLPNVHHSS) has biased composition (polar residues).

It belongs to the beta-defensin family. The three-dimensional structure formed by the three intramolecular disulfide bridges is indispensable for antimicrobial activity.

It localises to the secreted. Functionally, host defense peptide that exhibits antimicrobial activity against both Gram-negative bacteria, such as E.coli and S.typhimurium, and Gram-positive bacteria, such as S.aureus and B.subtilis. Inhibits cell adhesion of E.coli on intestinal epithelial enterocytes. Causes rapid permeabilization of both the outer and inner membrane of E.coli, leading to morphological alterations on the bacterial surface. Binds to bacterial lipopolysaccharides (LPS) with high affinity, and may thereby be involved in immunoregulation through LPS neutralization. May contribute to epididymal innate immunity and protect the sperm against attack by microorganisms. The chain is Defensin beta 118 (DEFB118) from Gorilla gorilla gorilla (Western lowland gorilla).